The chain runs to 1648 residues: MDFSIPPTLPLDLQSRLNELIQDYKDENLTRKGYETKRKQLLDKFEISQMRPYTPLRSPNSRKSKHLHRRNTSLASSITSLPNSIDRRHSIYRVTTINSTSANNTPRRRSKRYTASLQSSLPGSSDENGSVKDAVYNPMIPLLPRHTGAENTSSGDSAMTDSLPLILRGRFEHYDGQTAMISINSKGKETFITWDKLYLKAERVAHELNKSHLYKMDKILLWYNKNDVIEFTIALLGCFISGMAAVPVSFETYSLREILEIIKVTNSKFVLISNACHRQLDNLYSSSNHSKVKLVKNDVFQQIKFVKTDDLGTYTKAKKTSPTFDIPNISYIEFTRTPLGRLSGVVMKHNILINQFETMTKILNSRSMPHWKQKSQSIRKPFHKKIMATNSRFVILNSLDPTRSTGLIMGVLFNLFTGNLMISIDSSILQRPGGYENIIDKFRADILLNDQLQLKQVVINYLENPESAFSKKHKIDFSCIKSCLTSCTTIDTDVSEMVVHKWLKNLGCIDAPFCYSPMLTLLDFGGIFISIRDQLGNLENFPIHNSKLRLQNELFINREKLKLNEVECSITAMINSSSSFKDYLKLETFGFPIPDITLCVVNPDTNTLVQDLTVGEIWISSNHITDEFYQMDKVNEFVFKAKLNYSEMFSWAKYEMPTNEKSQAVTEQLDTILNICPANTYFMRTKLMGFVHNGKIYVLSLIEDMFLQNRLIRLPNWAHTSNLLYAKKGNQSAQPKGNTGAESTKAIDISSLSGETSSGYKRVVESHYLQQITETVVRTVNTVFEVAAFELQHHKEEHFLVMVVESSLAKTEEESKNGETTDTTLMKFAETQRNKLETKMNDLTDQIFRILWIFHKIQPMCILVVPRDTLPRRYCSLELANSTVEKKFLNNDLSAQFVKFQFDNVILDFLPHSAYYNESILSEHLSKLRKMALQEEYAMIEPAYRNGGPVKPKLALQCSGVDYRDESVDTRSHTKLTDFKSILEILEWRISNYGNETAFSDGTNTNLVNSSASNDNNVHKKVSWASFGKIVAGFLKKIVGSKIPLKHGDPIIIMCENSVEYVAMIMACLYCNLLVIPLPSVKESVIEEDLKGLVNIIQSYKVKRVFVDAKLHSLLNDNNVVNKCFKKYKSLIPKITVFSKVKTKNALTVSMFKNVLKQKFGAKPGTRIGMTPCVVWVNTEYDVTSNIHVTMTHSSLLNASKIVKETLQLRNNSPLFSICSHTSGLGFMFSCLLGIYTGASTCLFSLTDVLTDPKEFLIGLQNLNVKDLYLKLETLYALLDRASSLIEGFKNKKENINSAKNNTSGSLREDVFKGVRNIMIPFPNRPRIYTIENILKRYSTISLSCTQISYVYQHHFNPLISLRSYLDIPPVDLYLDPFSLREGIIREVNPNDVSAGNYIKIQDSGVVPVCTDVSVVNPETLLPCVDGEFGEIWCCSEANAFDYFVCNSSKNKLYKDPFITEQFKSKMKSEVNNTLSYLRTGDLGFIKNVSCTNSQGEVVNLNLLFVLGSIHESIEILGLTHFVSDLERTVKDVHSDIGSCLIAKAGGLLVCLIRCKERHNPILGNLTTLIVSELLNKHGVILDLCTFVRTKGISPKNSSMIMEVWAKNRASIMQAWFDQKIQIEAQFGINYGENISIYLLSDYEKDNI.

Residues 5–101 form the DMAP1-binding domain; sequence IPPTLPLDLQ…YRVTTINSTS (97 aa). Asn-28, Asn-71, and Asn-98 each carry an N-linked (GlcNAc...) asparagine glycan. Disordered stretches follow at residues 52–73 and 96–130; these read PYTP…RNTS and TINS…ENGS. The segment covering 60 to 71 has biased composition (basic residues); sequence NSRKSKHLHRRN. 2 stretches are compositionally biased toward polar residues: residues 96–105 and 113–128; these read TINSTSANNT and YTAS…SDEN. A Phosphoserine modification is found at Ser-99. 3 N-linked (GlcNAc...) asparagine glycosylation sites follow: Asn-128, Asn-151, and Asn-209. Residues 158 to 893 form a fatty acyl-AMP ligase-like domain 1 region; that stretch reads AMTDSLPLIL…VEKKFLNNDL (736 aa). Residues 228 to 248 traverse the membrane as a helical segment; sequence VIEFTIALLGCFISGMAAVPV. N-linked (GlcNAc...) asparagine glycans are attached at residues Asn-288, Asn-328, Asn-575, Asn-644, and Asn-730. The residue at position 751 (Ser-751) is a Phosphoserine. N-linked (GlcNAc...) asparagine glycosylation is found at Asn-881, Asn-917, Asn-995, and Asn-1009. The tract at residues 950–1648 is fatty acyl-AMP ligase-like domain 2; it reads VKPKLALQCS…LLSDYEKDNI (699 aa). Residues 1061–1081 traverse the membrane as a helical segment; it reads YVAMIMACLYCNLLVIPLPSV. Residue Asn-1198 is glycosylated (N-linked (GlcNAc...) asparagine). A helical transmembrane segment spans residues 1224–1244; sequence GLGFMFSCLLGIYTGASTCLF. N-linked (GlcNAc...) asparagine glycans are attached at residues Asn-1301, Asn-1302, Asn-1447, Asn-1472, Asn-1488, Asn-1565, Asn-1597, and Asn-1634.

It is found in the vacuole membrane. Its subcellular location is the mitochondrion membrane. Functionally, homeostatic regulator of a chemically distinct subset of diacylglycerols (DAGs) with C36 chain length that prevents the toxic accumulation of these specific DAGs in the logarithmic growth phase, which otherwise leads to endoplasmic reticulum stress. Maintains the basal level of DAG subspecies by directly facilitating DAG to triacylglycerol (TAG) conversion process, possibly via adenylation activity of its FLD domains. Does not affect the abundant DAG species (representing over 90% of total DAG pool), comprised of C32 and C34 chain lengths. Required for vacuole fusion-mediated osmoadaptation. This is Homeostatic regulator of DAG from Saccharomyces cerevisiae (strain ATCC 204508 / S288c) (Baker's yeast).